A 540-amino-acid chain; its full sequence is Glucose-6-phosphate isomerase (540 aa).

Glu346 functions as the Proton donor in the catalytic mechanism. Catalysis depends on residues His377 and Lys505.

It belongs to the GPI family.

Its subcellular location is the cytoplasm. The catalysed reaction is alpha-D-glucose 6-phosphate = beta-D-fructose 6-phosphate. It functions in the pathway carbohydrate biosynthesis; gluconeogenesis. The protein operates within carbohydrate degradation; glycolysis; D-glyceraldehyde 3-phosphate and glycerone phosphate from D-glucose: step 2/4. Catalyzes the reversible isomerization of glucose-6-phosphate to fructose-6-phosphate. The protein is Glucose-6-phosphate isomerase of Francisella tularensis subsp. holarctica (strain FTNF002-00 / FTA).